A 210-amino-acid polypeptide reads, in one-letter code: Imidazoleglycerol-phosphate dehydratase (210 aa).

This sequence belongs to the imidazoleglycerol-phosphate dehydratase family.

Its subcellular location is the cytoplasm. It catalyses the reaction D-erythro-1-(imidazol-4-yl)glycerol 3-phosphate = 3-(imidazol-4-yl)-2-oxopropyl phosphate + H2O. It participates in amino-acid biosynthesis; L-histidine biosynthesis; L-histidine from 5-phospho-alpha-D-ribose 1-diphosphate: step 6/9. This is Imidazoleglycerol-phosphate dehydratase from Mycobacterium leprae (strain Br4923).